The chain runs to 513 residues: ATP synthase subunit alpha (513 aa).

169-176 lines the ATP pocket; that stretch reads GDRQTGKT.

It belongs to the ATPase alpha/beta chains family. F-type ATPases have 2 components, CF(1) - the catalytic core - and CF(0) - the membrane proton channel. CF(1) has five subunits: alpha(3), beta(3), gamma(1), delta(1), epsilon(1). CF(0) has three main subunits: a(1), b(2) and c(9-12). The alpha and beta chains form an alternating ring which encloses part of the gamma chain. CF(1) is attached to CF(0) by a central stalk formed by the gamma and epsilon chains, while a peripheral stalk is formed by the delta and b chains.

It is found in the cell inner membrane. It catalyses the reaction ATP + H2O + 4 H(+)(in) = ADP + phosphate + 5 H(+)(out). Produces ATP from ADP in the presence of a proton gradient across the membrane. The alpha chain is a regulatory subunit. This chain is ATP synthase subunit alpha, found in Shewanella sp. (strain ANA-3).